A 180-amino-acid polypeptide reads, in one-letter code: NAD(P)H-quinone oxidoreductase subunit I, chloroplastic (180 aa).

4Fe-4S ferredoxin-type domains follow at residues glycine 55–arginine 84 and leucine 95–glutamate 124. Residues cysteine 64, cysteine 67, cysteine 70, cysteine 74, cysteine 104, cysteine 107, cysteine 110, and cysteine 114 each contribute to the [4Fe-4S] cluster site.

Belongs to the complex I 23 kDa subunit family. NDH is composed of at least 16 different subunits, 5 of which are encoded in the nucleus. Requires [4Fe-4S] cluster as cofactor.

The protein localises to the plastid. The protein resides in the chloroplast thylakoid membrane. The enzyme catalyses a plastoquinone + NADH + (n+1) H(+)(in) = a plastoquinol + NAD(+) + n H(+)(out). It catalyses the reaction a plastoquinone + NADPH + (n+1) H(+)(in) = a plastoquinol + NADP(+) + n H(+)(out). Functionally, NDH shuttles electrons from NAD(P)H:plastoquinone, via FMN and iron-sulfur (Fe-S) centers, to quinones in the photosynthetic chain and possibly in a chloroplast respiratory chain. The immediate electron acceptor for the enzyme in this species is believed to be plastoquinone. Couples the redox reaction to proton translocation, and thus conserves the redox energy in a proton gradient. The chain is NAD(P)H-quinone oxidoreductase subunit I, chloroplastic from Drimys granadensis.